Here is a 304-residue protein sequence, read N- to C-terminus: Large ribosomal subunit protein uL18z (304 aa).

The segment at 285-304 (LNALNSSAGADDDDEEEDDE) is disordered. The span at 294-304 (ADDDDEEEDDE) shows a compositional bias: acidic residues.

Belongs to the universal ribosomal protein uL18 family. In terms of assembly, component of the large ribosomal subunit (LSU).

It localises to the cytoplasm. Its subcellular location is the nucleus. Functionally, component of the ribosome, a large ribonucleoprotein complex responsible for the synthesis of proteins in the cell. The small ribosomal subunit (SSU) binds messenger RNAs (mRNAs) and translates the encoded message by selecting cognate aminoacyl-transfer RNA (tRNA) molecules. The large subunit (LSU) contains the ribosomal catalytic site termed the peptidyl transferase center (PTC), which catalyzes the formation of peptide bonds, thereby polymerizing the amino acids delivered by tRNAs into a polypeptide chain. The nascent polypeptides leave the ribosome through a tunnel in the LSU and interact with protein factors that function in enzymatic processing, targeting, and the membrane insertion of nascent chains at the exit of the ribosomal tunnel. The sequence is that of Large ribosomal subunit protein uL18z (RPL5A) from Oryza sativa subsp. japonica (Rice).